The chain runs to 467 residues: Argininosuccinate lyase (467 aa).

This sequence belongs to the lyase 1 family. Argininosuccinate lyase subfamily.

Its subcellular location is the cytoplasm. It catalyses the reaction 2-(N(omega)-L-arginino)succinate = fumarate + L-arginine. It participates in amino-acid biosynthesis; L-arginine biosynthesis; L-arginine from L-ornithine and carbamoyl phosphate: step 3/3. In Chromohalobacter salexigens (strain ATCC BAA-138 / DSM 3043 / CIP 106854 / NCIMB 13768 / 1H11), this protein is Argininosuccinate lyase.